Here is a 637-residue protein sequence, read N- to C-terminus: Protein arginine N-methyltransferase 5 (637 aa).

Residue alanine 2 is modified to N-acetylalanine; in Protein arginine N-methyltransferase 5, N-terminally processed. Positions 13 to 292 (RVSSGRDLNC…YLEYLSQNRP (280 aa)) are TIM barrel. The 308-residue stretch at 308–615 (LQSPLQPLMD…SNSKKVWYEW (308 aa)) folds into the SAM-dependent MTase PRMT-type domain. Residue tyrosine 324 participates in S-adenosyl-L-methionine binding. Phenylalanine 327 is a binding site for a protein. Residues 333 to 334 (KY), glutamate 392, and 419 to 420 (DM) each bind S-adenosyl-L-methionine. The a protein site is built by glutamate 435 and glutamate 444. Active-site proton donor/acceptor residues include glutamate 435 and glutamate 444. The tract at residues 465-637 (PGEYTSFLAP…PTGRSYTIGL (173 aa)) is beta barrel. The tract at residues 488–494 (REKDRDP) is dimerization.

Belongs to the class I-like SAM-binding methyltransferase superfamily. Protein arginine N-methyltransferase family. As to quaternary structure, forms, at least, homodimers and homotetramers. Component of the methylosome complex, composed of PRMT5, WDR77 and CLNS1A. Found in a complex composed of PRMT5, WDR77 and RIOK1. RIOK1 and CLNS1A associate with PRMT5 in a mutually exclusive fashion, which allows the recruitment of distinct methylation substrates, such as nucleolin/NCL and Sm proteins, respectively. Interacts with PRDM1. Identified in a complex composed of methylosome and PRMT1 and ERH. Interacts with EGFR; methylates EGFR and stimulates EGFR-mediated ERK activation. Interacts with HOXA9. Interacts with SRGAP2. Found in a complex with COPRS, RUNX1 and CBFB. Interacts with CHTOP; the interaction symmetrically methylates CHTOP, but seems to require the presence of PRMT1. Interacts with EPB41L3; this modulates methylation of target proteins. Component of a high molecular weight E2F-pocket protein complex, CERC (cyclin E1 repressor complex). Associates with SWI/SNF remodeling complexes containing SMARCA2 and SMARCA4. Interacts with JAK2, SSTR1, SUPT5H, BRAF and with active RAF1. Interacts with LSM11, PRMT7 and SNRPD3. Interacts with COPRS; promoting its recruitment on histone H4. Interacts with CLNS1A/pICln. Identified in a complex with CLNS1A/pICln and Sm proteins. Interacts with RPS10. Interacts with WDR77. Interacts with IWS1. Interacts with CRY1. Interacts with POLR2A. Interacts with SMN1/SMN2. Interacts with LYAR; this interaction is direct. Interacts with TTC5/STRAP; this interaction is DNA damage-dependent and promotes PRMT5 interaction with p53/TP53. Interacts with p53/TP53 in response to DNA damage; the interaction is TTC5/STRAP dependent. Interacts with FAM47E; the interaction is direct, promotes PRMT5 localization to chromatin, and does not disrupt its association with WDR77 or STUB1. Interacts with TDRD6. Interacts with STUB1. Interacts with MBD2. Does not interact with MBD3. As to expression, ubiquitous.

The protein localises to the cytoplasm. It localises to the nucleus. The protein resides in the chromosome. It is found in the golgi apparatus. It catalyses the reaction L-arginyl-[protein] + 2 S-adenosyl-L-methionine = N(omega),N(omega)'-dimethyl-L-arginyl-[protein] + 2 S-adenosyl-L-homocysteine + 2 H(+). Its activity is regulated as follows. Activity is increased by EGF, HGF, FGF1 or FGF2 treatments, and slightly decreased by NGF treatment. Its function is as follows. Arginine methyltransferase that can both catalyze the formation of omega-N monomethylarginine (MMA) and symmetrical dimethylarginine (sDMA), with a preference for the formation of MMA. Specifically mediates the symmetrical dimethylation of arginine residues in the small nuclear ribonucleoproteins Sm D1 (SNRPD1) and Sm D3 (SNRPD3); such methylation being required for the assembly and biogenesis of snRNP core particles. Methylates SUPT5H and may regulate its transcriptional elongation properties. May methylate the N-terminal region of MBD2. Mono- and dimethylates arginine residues of myelin basic protein (MBP) in vitro. May play a role in cytokine-activated transduction pathways. Negatively regulates cyclin E1 promoter activity and cellular proliferation. Methylates histone H2A and H4 'Arg-3' during germ cell development. Methylates histone H3 'Arg-8', which may repress transcription. Methylates the Piwi proteins (PIWIL1, PIWIL2 and PIWIL4), methylation of Piwi proteins being required for the interaction with Tudor domain-containing proteins and subsequent localization to the meiotic nuage. Methylates RPS10. Attenuates EGF signaling through the MAPK1/MAPK3 pathway acting at 2 levels. First, monomethylates EGFR; this enhances EGFR 'Tyr-1197' phosphorylation and PTPN6 recruitment, eventually leading to reduced SOS1 phosphorylation. Second, methylates RAF1 and probably BRAF, hence destabilizing these 2 signaling proteins and reducing their catalytic activity. Required for induction of E-selectin and VCAM-1, on the endothelial cells surface at sites of inflammation. Methylates HOXA9. Methylates and regulates SRGAP2 which is involved in cell migration and differentiation. Acts as a transcriptional corepressor in CRY1-mediated repression of the core circadian component PER1 by regulating the H4R3 dimethylation at the PER1 promoter. Methylates GM130/GOLGA2, regulating Golgi ribbon formation. Methylates H4R3 in genes involved in glioblastomagenesis in a CHTOP- and/or TET1-dependent manner. Symmetrically methylates POLR2A, a modification that allows the recruitment to POLR2A of proteins including SMN1/SMN2 and SETX. This is required for resolving RNA-DNA hybrids created by RNA polymerase II, that form R-loop in transcription terminal regions, an important step in proper transcription termination. Along with LYAR, binds the promoter of gamma-globin HBG1/HBG2 and represses its expression. Symmetrically methylates NCL. Methylates p53/TP53; methylation might possibly affect p53/TP53 target gene specificity. Involved in spliceosome maturation and mRNA splicing in prophase I spermatocytes through the catalysis of the symmetrical arginine dimethylation of SNRPB (small nuclear ribonucleoprotein-associated protein) and the interaction with tudor domain-containing protein TDRD6. The protein is Protein arginine N-methyltransferase 5 (PRMT5) of Homo sapiens (Human).